The chain runs to 336 residues: MIYQSLFSHQASLPSEQLPFTVILLNDWGLIRVTGKDRVKYLQGQITLDVPLLKENQHILGAHCDPKGKILSTVRLFHYLKGLAFITRKSLLHDELMELRKYAVFSKVEIDIAESTVLLGIAGDQARKVLKNCFEKLPTETEPVVHEDDYSLLHFSSPRERFLLVSQAFKEGDFLIQKLQDQAVFRSSEQWLALDIESGFPIIDAKNKTQFIPQAANLKALGGISFTKGCYTGQEVVARTEYRGVNKKALYWLTGKACRVPDVGEALEIQMEEDYRRTGVVLAAVKLQDGSLWVQAILNHDFQKDSILRVKGDENGRLMISHRSFKKFEPSSNPIA.

Folate contacts are provided by W28 and W191.

This sequence belongs to the tRNA-modifying YgfZ family.

Its subcellular location is the cytoplasm. Its function is as follows. Folate-binding protein involved in regulating the level of ATP-DnaA and in the modification of some tRNAs. It is probably a key factor in regulatory networks that act via tRNA modification, such as initiation of chromosomal replication. The chain is tRNA-modifying protein YgfZ from Hamiltonella defensa subsp. Acyrthosiphon pisum (strain 5AT).